The following is a 79-amino-acid chain: uncharacterized protein (79 aa).

The segment at 20 to 52 (TERGAGLSPAAPPDPSPAIAPTMAEGGVPSPGP) is disordered.

This is an uncharacterized protein from Homo sapiens (Human).